A 1269-amino-acid chain; its full sequence is Rho GTPase-activating protein 29 (1269 aa).

Residues S171, S176, S179, and S190 each carry the phosphoserine modification. The 271-residue stretch at 192-462 folds into the F-BAR domain; sequence IELDSMLLKN…SAKLYDPGQE (271 aa). Residues 296–418 adopt a coiled-coil conformation; the sequence is RKNEMEKQRK…EILTQLRKLV (123 aa). Disordered regions lie at residues 472–523 and 540–599; these read SAEE…NSAD and DSES…NSLG. Phosphoserine occurs at positions 499, 519, and 552. Positions 540-559 are enriched in low complexity; the sequence is DSESTGGSSESRSLDSESIS. A Phorbol-ester/DAG-type zinc finger spans residues 612 to 657; the sequence is THKFRKLRSPTKCRDCEGIVVFHGVECEECLLVCHRKCLENLVIIC. In terms of domain architecture, Rho-GAP spans 671–886; sequence AEFTQVAKKE…FLITYSQKIF (216 aa). The tract at residues 909–936 is disordered; it reads PGYLPKSLLSPEERDPERSMKSLFFSSK. S918 is subject to Phosphoserine. Over residues 919–928 the composition is skewed to basic and acidic residues; it reads PEERDPERSM. Phosphoserine is present on residues S954 and S1026. Positions 1120–1269 are disordered; the sequence is RSSGDHPVSI…DLEDEIPQFV (150 aa). Residues 1128 to 1145 are compositionally biased toward polar residues; that stretch reads SITQPSKPYTEPVRSTRQ. A phosphoserine mark is found at S1152 and S1154. The span at 1162 to 1172 shows a compositional bias: polar residues; sequence TPRTLQPQHWT. The segment covering 1229–1241 has biased composition (basic and acidic residues); the sequence is SRPEEKAEERDQP. Residues 1259-1269 show a composition bias toward acidic residues; that stretch reads EDLEDEIPQFV. An interaction with PTPN13/PTPL1 region spans residues 1266 to 1269; it reads PQFV.

Interacts with PTPN13/PTPL1. Interacts with RAP2A via its coiled coil domain. Interacts with RASIP1.

Functionally, GTPase activator for the Rho-type GTPases by converting them to an inactive GDP-bound state. Has strong activity toward RHOA, and weaker activity toward RAC1 and CDC42. May act as a specific effector of RAP2A to regulate Rho. In concert with RASIP1, suppresses RhoA signaling and dampens ROCK and MYH9 activities in endothelial cells and plays an essential role in blood vessel tubulogenesis. This Bos taurus (Bovine) protein is Rho GTPase-activating protein 29 (ARHGAP29).